Here is a 64-residue protein sequence, read N- to C-terminus: Toxin Tce3 (64 aa).

The 62-residue stretch at 1–62 folds into the LCN-type CS-alpha/beta domain; it reads KDGYIIEHRG…IFDSNNNKCS (62 aa). Intrachain disulfides connect C11-C61, C15-C37, C23-C42, and C27-C44.

Belongs to the long (4 C-C) scorpion toxin superfamily. Sodium channel inhibitor family. Beta subfamily. Expressed by the venom gland.

The protein resides in the secreted. Functionally, inhibits the sodium (Nav) currents in an apparent irreversible manner. Produces small depolarization and induces repetitive firing in squid axons. Is specific for arthropods (crickets, triatomides, crabs and squids), but is non-toxic to mice. Shows antibacterial activity against both Gram-positive and Gram-negative bacteria. This Tityus cerroazul (Scorpion) protein is Toxin Tce3.